The chain runs to 120 residues: Large ribosomal subunit protein uL18 (120 aa).

It belongs to the universal ribosomal protein uL18 family. Part of the 50S ribosomal subunit; part of the 5S rRNA/L5/L18/L25 subcomplex. Contacts the 5S and 23S rRNAs.

Its function is as follows. This is one of the proteins that bind and probably mediate the attachment of the 5S RNA into the large ribosomal subunit, where it forms part of the central protuberance. The protein is Large ribosomal subunit protein uL18 of Staphylococcus carnosus (strain TM300).